Consider the following 366-residue polypeptide: 1-deoxy-D-xylulose 5-phosphate reductoisomerase (366 aa).

Residues threonine 7, glycine 8, serine 9, isoleucine 10, glycine 31, lysine 32, asparagine 33, and asparagine 113 each contribute to the NADPH site. A 1-deoxy-D-xylulose 5-phosphate-binding site is contributed by lysine 114. Glutamate 115 contacts NADPH. Aspartate 133 lines the Mn(2+) pocket. 1-deoxy-D-xylulose 5-phosphate contacts are provided by serine 134, glutamate 135, serine 158, and histidine 181. Glutamate 135 serves as a coordination point for Mn(2+). Glycine 187 contacts NADPH. 1-deoxy-D-xylulose 5-phosphate-binding residues include serine 194, asparagine 199, lysine 200, and glutamate 203. Mn(2+) is bound at residue glutamate 203.

Belongs to the DXR family. Mg(2+) serves as cofactor. Requires Mn(2+) as cofactor.

It catalyses the reaction 2-C-methyl-D-erythritol 4-phosphate + NADP(+) = 1-deoxy-D-xylulose 5-phosphate + NADPH + H(+). The protein operates within isoprenoid biosynthesis; isopentenyl diphosphate biosynthesis via DXP pathway; isopentenyl diphosphate from 1-deoxy-D-xylulose 5-phosphate: step 1/6. Its function is as follows. Catalyzes the NADPH-dependent rearrangement and reduction of 1-deoxy-D-xylulose-5-phosphate (DXP) to 2-C-methyl-D-erythritol 4-phosphate (MEP). This is 1-deoxy-D-xylulose 5-phosphate reductoisomerase from Helicobacter pylori (strain G27).